The chain runs to 125 residues: Large ribosomal subunit protein bL12 (125 aa).

It belongs to the bacterial ribosomal protein bL12 family. As to quaternary structure, homodimer. Part of the ribosomal stalk of the 50S ribosomal subunit. Forms a multimeric L10(L12)X complex, where L10 forms an elongated spine to which 2 to 4 L12 dimers bind in a sequential fashion. Binds GTP-bound translation factors.

Forms part of the ribosomal stalk which helps the ribosome interact with GTP-bound translation factors. Is thus essential for accurate translation. This chain is Large ribosomal subunit protein bL12, found in Rickettsia africae (strain ESF-5).